The following is a 637-amino-acid chain: Poly(U)-binding-splicing factor hfp (637 aa).

Basic and acidic residues-rich tracts occupy residues 1-20 (MGSN…REIS) and 28-37 (TRSDSGKSTD). The segment at 1–41 (MGSNDRASRSPRSDDQREISDMPATKRTRSDSGKSTDSKIP) is disordered. 2 positions are modified to phosphoserine: Ser13 and Ser30. RRM domains are found at residues 130–208 (CRVY…RPSN) and 227–305 (NRIY…RSIT). The region spanning 537 to 627 (RVIILRNMVG…RRVVAELYDQ (91 aa)) is the RRM 3; atypical domain.

The protein belongs to the RRM half pint family. Interacts with enc. However, given the cytoplasmic localization of enc, the relevance of such interaction is unclear. As to expression, expressed in all germline cells and within the follicle cell.

The protein resides in the nucleus. In terms of biological role, splicing factor that regulates oogenesis and controls both mitosis and mRNA localization in the germline by regulating mRNA splicing of a subset of genes within the ovary. Probably acts by regulating the alternative splice site selection of the otu transcript. Also regulates the alternative splicing of eIF4E1 and grk, while it is not involved in the splicing of par-1, sqd or psq. Involved in the alternative splicing of the bicistronic pre-mRNA encoding Kdm3 and CG8176; required for the efficient production of mRNA encoding Kdm3 and Kdm3-mediated regulation of rhino-dependent piRNA production. The polypeptide is Poly(U)-binding-splicing factor hfp (Drosophila melanogaster (Fruit fly)).